We begin with the raw amino-acid sequence, 764 residues long: Thyrotropin receptor (764 aa).

The signal sequence occupies residues 1–21; it reads MSLTPLLQLALLLALPRSLRG. Topologically, residues 22–413 are extracellular; the sequence is KGCPSPPCEC…EFNPCEDIMG (392 aa). C31 and C41 are disulfide-bonded. N-linked (GlcNAc...) asparagine glycans are attached at residues N77 and N99. LRR repeat units lie at residues 125 to 150, 151 to 174, 176 to 199, 201 to 223, 225 to 248, and 250 to 271; these read LPLLKFLGIFNTGLRIFPDLTKVYST, DVFFILEITDNPYMTSIPANAFQG, CNETLTLKLYNNGFTSVQGHAFNG, KLDAVYLNKNKYLTVIDKDAFGG, FSGPTLLDVSYTSVTALPPKGLEH, and KELIARNTWTLKKLPLSLSFLH. N177 and N198 each carry an N-linked (GlcNAc...) asparagine glycan. N-linked (GlcNAc...) asparagine glycosylation occurs at N302. Position 385 is a sulfotyrosine (Y385). The chain crosses the membrane as a helical span at residues 414 to 441; the sequence is YRFLRIVVWFVSLLALLGNVFVLVILLT. At 442-450 the chain is on the cytoplasmic side; sequence SHYKLTVPR. The helical transmembrane segment at 451-473 threads the bilayer; sequence FLMCNLAFADFCMGMYLLLIASV. Topologically, residues 474–494 are extracellular; sequence DLYTQSEYYNHAIDWQTGPGC. C494 and C569 are oxidised to a cystine. The helical transmembrane segment at 495–517 threads the bilayer; that stretch reads NTAGFFTVFASELSVYTLTVITL. Residues 518–537 lie on the Cytoplasmic side of the membrane; that stretch reads ERWYAITFAMRLDRKIRLRH. The helical transmembrane segment at 538-560 threads the bilayer; that stretch reads AYAIMAGGWVCCFLLALLPLVGI. Residues 561-580 are Extracellular-facing; that stretch reads SSYAKVSICLPMDTETPLAL. Residues 581-602 traverse the membrane as a helical segment; sequence AYIILVLLLNIVAFTIVCSCYV. The Cytoplasmic portion of the chain corresponds to 603–625; the sequence is KIYITVRNPQYNPGDKDTKIAKR. A helical transmembrane segment spans residues 626–649; that stretch reads MAVLIFTDFMCMAPISFYALSALM. At 650-660 the chain is on the extracellular side; that stretch reads NKPLITVTNSK. Residues 661–682 traverse the membrane as a helical segment; it reads ILLVLFYPLNSCANPFLYAIFT. The Cytoplasmic segment spans residues 683 to 764; it reads KAFQRDVFIL…ISKEYKQPVL (82 aa). Positions 762–764 match the PDZ-binding motif; that stretch reads PVL.

This sequence belongs to the G-protein coupled receptor 1 family. FSH/LSH/TSH subfamily. In terms of assembly, interacts with heterodimer GPHA2:GPHB5; this interaction stimulates cAMP production. Interacts (via the PDZ-binding motif) with SCRIB; regulates TSHR trafficking and function. Glycosylated. In terms of processing, sulfated. Sulfation on Tyr-385 plays a role in thyrotropin receptor binding and activation. As to expression, expressed in thyroide cells (at protein level).

It localises to the cell membrane. The protein localises to the basolateral cell membrane. In terms of biological role, receptor for the thyroid-stimulating hormone (TSH) or thyrotropin. Also acts as a receptor for the heterodimeric glycoprotein hormone (GPHA2:GPHB5) or thyrostimulin. The activity of this receptor is mediated by G proteins which activate adenylate cyclase. Plays a central role in controlling thyroid cell metabolism. The polypeptide is Thyrotropin receptor (TSHR) (Sus scrofa (Pig)).